Reading from the N-terminus, the 69-residue chain is Sec-independent protein translocase protein TatA (69 aa).

The chain crosses the membrane as a helical span at residues 1–21 (MGSLSIWHWLIVLAIALLLFG). A disordered region spans residues 41 to 69 (KGMNDDEETPPPAQSTTSRTVEHKADESK). A compositionally biased stretch (basic and acidic residues) spans 60–69 (TVEHKADESK).

This sequence belongs to the TatA/E family. In terms of assembly, the Tat system comprises two distinct complexes: a TatABC complex, containing multiple copies of TatA, TatB and TatC subunits, and a separate TatA complex, containing only TatA subunits. Substrates initially bind to the TatABC complex, which probably triggers association of the separate TatA complex to form the active translocon.

It is found in the cell inner membrane. Part of the twin-arginine translocation (Tat) system that transports large folded proteins containing a characteristic twin-arginine motif in their signal peptide across membranes. TatA could form the protein-conducting channel of the Tat system. In Rhizobium rhizogenes (strain K84 / ATCC BAA-868) (Agrobacterium radiobacter), this protein is Sec-independent protein translocase protein TatA.